The sequence spans 125 residues: Large ribosomal subunit protein bL19 (125 aa).

Belongs to the bacterial ribosomal protein bL19 family.

Its function is as follows. This protein is located at the 30S-50S ribosomal subunit interface and may play a role in the structure and function of the aminoacyl-tRNA binding site. This Ehrlichia ruminantium (strain Gardel) protein is Large ribosomal subunit protein bL19.